Here is a 311-residue protein sequence, read N- to C-terminus: MAGLSIIFMGTPDFACPTLTRLIERGEDVIAVVTQPDRPKGRGQKLVPPPVKVIAEEHGIPVLQPQKVRAPEVVAQIRELNPDLIVVVAFGQILPQSLLEIPRHGCINIHASLLPRYRGAAPINWCLINGETETGITTMQMDAGLDTGDMLVKRSISIGPDEDAQSLHDRLSLLGAETIDETLDRLQVGTLTREKQDDALTCYAPMLKKEDGLIDWKQEPQQIKNLVRGFTPWPGAYTTLDGKTLKLYKVSVATECGKPGDIMAVGKDGIIVGCGSGSLRIEELQLEGRKRLSAQDFLAGCRLEPGIRLGH.

A (6S)-5,6,7,8-tetrahydrofolate-binding site is contributed by 112–115; that stretch reads SLLP.

This sequence belongs to the Fmt family.

The catalysed reaction is L-methionyl-tRNA(fMet) + (6R)-10-formyltetrahydrofolate = N-formyl-L-methionyl-tRNA(fMet) + (6S)-5,6,7,8-tetrahydrofolate + H(+). Its function is as follows. Attaches a formyl group to the free amino group of methionyl-tRNA(fMet). The formyl group appears to play a dual role in the initiator identity of N-formylmethionyl-tRNA by promoting its recognition by IF2 and preventing the misappropriation of this tRNA by the elongation apparatus. This Geobacter metallireducens (strain ATCC 53774 / DSM 7210 / GS-15) protein is Methionyl-tRNA formyltransferase.